The following is a 270-amino-acid chain: GTP cyclohydrolase FolE2 (270 aa).

It belongs to the GTP cyclohydrolase IV family.

It catalyses the reaction GTP + H2O = 7,8-dihydroneopterin 3'-triphosphate + formate + H(+). Its pathway is cofactor biosynthesis; 7,8-dihydroneopterin triphosphate biosynthesis; 7,8-dihydroneopterin triphosphate from GTP: step 1/1. Functionally, converts GTP to 7,8-dihydroneopterin triphosphate. In Cupriavidus pinatubonensis (strain JMP 134 / LMG 1197) (Cupriavidus necator (strain JMP 134)), this protein is GTP cyclohydrolase FolE2.